Consider the following 447-residue polypeptide: GTPase Der (447 aa).

2 consecutive EngA-type G domains span residues 3 to 167 and 181 to 354; these read PVIA…FAQR and IRLA…AAAM. GTP is bound by residues 9–16, 56–60, 119–122, 187–194, 234–238, and 299–302; these read GRPNVGKS, DTGGF, NKAE, DTAGI, and NKWD. Positions 355–439 constitute a KH-like domain; sequence SNLSTPKLTR…PLRIELRSGK (85 aa).

It belongs to the TRAFAC class TrmE-Era-EngA-EngB-Septin-like GTPase superfamily. EngA (Der) GTPase family. In terms of assembly, associates with the 50S ribosomal subunit.

GTPase that plays an essential role in the late steps of ribosome biogenesis. This is GTPase Der from Herminiimonas arsenicoxydans.